The primary structure comprises 1347 residues: Protocadherin-11 X-linked (1347 aa).

Positions 1–23 (MDLLSGTYIFAVLLACVVFHSGA) are cleaved as a signal peptide. Over 24-812 (QEKNYTIREE…VSSPTSDYVK (789 aa)) the chain is Extracellular. Cadherin domains are found at residues 26-139 (KNYT…APLF), 140-249 (PATV…HPVF), 250-355 (KETE…VPSI), 362-466 (NPVN…APVF), 467-570 (TQSF…SPVF), 571-673 (THNE…KPVF), and 677-795 (PSNC…APVT). Residues asparagine 27, asparagine 48, and asparagine 54 are each glycosylated (N-linked (GlcNAc...) asparagine). The N-linked (GlcNAc...) asparagine glycan is linked to asparagine 344. The N-linked (GlcNAc...) asparagine glycan is linked to asparagine 553. Residue asparagine 773 is glycosylated (N-linked (GlcNAc...) asparagine). A helical transmembrane segment spans residues 813–833 (ILVAAVAGTITVVVVIFITAV). Topologically, residues 834 to 1347 (VRCRQAPHLK…DSPIMEEHPL (514 aa)) are cytoplasmic. Disordered stretches follow at residues 1057 to 1091 (LPEGSQESSSDGGLGDHDAGSLTSTSHGLPLGYPQ), 1097 to 1116 (RATPSNRTEGDGNSDPESTF), and 1326 to 1347 (FTPRQQARPSRGDSPIMEEHPL).

In terms of tissue distribution, expressed strongly in fetal brain and brain (cortex, amygdala, thalamus, substantia nigra, hippocampus, caudate nucleus and corpus callosum). Expressed at low level in testis.

The protein resides in the cell membrane. Functionally, potential calcium-dependent cell-adhesion protein. The chain is Protocadherin-11 X-linked (PCDH11X) from Homo sapiens (Human).